Here is a 60-residue protein sequence, read N- to C-terminus: Large ribosomal subunit protein uL30 (60 aa).

This sequence belongs to the universal ribosomal protein uL30 family. Part of the 50S ribosomal subunit.

The protein is Large ribosomal subunit protein uL30 of Staphylococcus epidermidis (strain ATCC 35984 / DSM 28319 / BCRC 17069 / CCUG 31568 / BM 3577 / RP62A).